The following is a 179-amino-acid chain: M-phase-specific PLK1-interacting protein (179 aa).

A disordered region spans residues 1–135 (MQRQNFRPPT…RVREKRMSNE (135 aa)). An Asymmetric dimethylarginine modification is found at Arg37. Phosphoserine is present on residues Ser40 and Ser47. Thr51 bears the Phosphothreonine mark. Arg57 carries the post-translational modification Omega-N-methylarginine. 2 positions are modified to asymmetric dimethylarginine: Arg59 and Arg68. The segment covering 60-71 (PYGSSHSPRHGG) has biased composition (low complexity). The residue at position 72 (Ser72) is a Phosphoserine. Arg77 carries the post-translational modification Asymmetric dimethylarginine. Low complexity predominate over residues 79–109 (GSPSPGGYPGSYSRSPAGSQQQFGYSPGQQQ). A phosphoserine mark is found at Ser80, Ser82, Ser93, Ser104, and Ser115. Polar residues predominate over residues 110-122 (THPQGSPRTSTPF). An Omega-N-methylarginine modification is found at Arg117. A Phosphothreonine modification is found at Thr120. Residues Ser124 and Ser133 each carry the phosphoserine modification.

Interacts with PLK1; phosphorylation-dependent. In terms of processing, phosphorylated during mitosis in the cell cycle probably by CDK1. Expressed at highest levels in liver and kidney; intermediate expression in skeletal muscle, pancreas, heart and placenta; low expression in brain and lung. Expressed in epidermis and hair follicles.

Its subcellular location is the nucleus. It is found in the cytoplasm. The protein resides in the cytoskeleton. It localises to the microtubule organizing center. The protein localises to the centrosome. In terms of biological role, may play a role in maintenance of cell cycle integrity by regulating mitosis or cytokinesis. The protein is M-phase-specific PLK1-interacting protein (MPLKIP) of Homo sapiens (Human).